We begin with the raw amino-acid sequence, 376 residues long: Inactive 2'-5'-oligoadenylate synthase 1B (376 aa).

The Cytoplasmic portion of the chain corresponds to 1 to 351 (MEQDLRSIPA…VPTEVGVPMK (351 aa)). A helical; Anchor for type IV membrane protein transmembrane segment spans residues 352–370 (YLLCRIFWLLFWSLFHFIF). Residues 371–376 (GKTSSG) lie on the Extracellular side of the membrane.

Belongs to the 2-5A synthase family. As to quaternary structure, interacts with OSBPL1A and ABCF3. Highly expressed in lung, spleen and thymus. Also detected at lower levels in heart, kidney, liver, lung, skeletal muscle, testes, uterus and ovaries.

It localises to the endoplasmic reticulum membrane. Functionally, does not have 2'-5'-OAS activity, but can bind double-stranded RNA. The full-length protein displays antiviral activity against flaviviruses such as west Nile virus (WNV) via an alternative antiviral pathway independent of RNase L. The truncated form of the protein lacks antiviral activity. The sequence is that of Inactive 2'-5'-oligoadenylate synthase 1B (Oas1b) from Mus musculus (Mouse).